The sequence spans 245 residues: Small ribosomal subunit protein uS3 (245 aa).

Positions 21–92 constitute a KH type-2 domain; sequence LNEFLTRELA…SVELYAEKVA (72 aa). Positions 215 to 245 are disordered; the sequence is EEILPTTPVSEQKGAKPEVPVMPQGAPVPTA.

This sequence belongs to the universal ribosomal protein uS3 family.

The protein resides in the cytoplasm. Its subcellular location is the nucleus. The protein localises to the nucleolus. It localises to the mitochondrion inner membrane. It is found in the cytoskeleton. The protein resides in the spindle. It carries out the reaction 2'-deoxyribonucleotide-(2'-deoxyribose 5'-phosphate)-2'-deoxyribonucleotide-DNA = a 3'-end 2'-deoxyribonucleotide-(2,3-dehydro-2,3-deoxyribose 5'-phosphate)-DNA + a 5'-end 5'-phospho-2'-deoxyribonucleoside-DNA + H(+). Its function is as follows. Component of the small ribosomal subunit. The ribosome is a large ribonucleoprotein complex responsible for the synthesis of proteins in the cell. Has endonuclease activity and plays a role in repair of damaged DNA. Also involved in other processes including regulation of transcription, translation of its cognate mRNA, spindle formation and chromosome movement during mitosis, and apoptosis. In Ictalurus punctatus (Channel catfish), this protein is Small ribosomal subunit protein uS3 (rps3).